The sequence spans 249 residues: Suppressor of silencing P0 (249 aa).

In terms of domain architecture, F-box-like spans 63–67; it reads LPFHL.

It belongs to the polerovirus P0 protein family. Interacts (via F-box-like domain) with host AGO1; this interaction targets AGO1 for degradation, and thereby suppresses the silencing function of the latter. Interacts (via F-box-like domain) with host ASK1 and ASK2 (SKP proteins); these interactions are essential for viral pathogenicity. Part of a SCF P0 complex composed of P0 and the host proteins SKP and CUL1.

In terms of biological role, suppressor of RNA-mediated gene silencing, also known as post-transcriptional gene silencing (PTGS), a mechanism of plant viral defense that limits the accumulation of viral RNAs. The P0 protein suppresses local PTGS using its F-box-like domain to mediate destabilization and degradation of the AGO1 protein. The chain is Suppressor of silencing P0 from Turnip yellows virus (isolate FL-1) (TuYV).